The sequence spans 342 residues: tRNA N6-adenosine threonylcarbamoyltransferase (342 aa).

2 residues coordinate Fe cation: His111 and His115. Residues 134 to 138 (LVSGG), Asp167, Gly180, and Asn277 each bind substrate. Residue Asp305 participates in Fe cation binding.

This sequence belongs to the KAE1 / TsaD family. Fe(2+) serves as cofactor.

It localises to the cytoplasm. It carries out the reaction L-threonylcarbamoyladenylate + adenosine(37) in tRNA = N(6)-L-threonylcarbamoyladenosine(37) in tRNA + AMP + H(+). Functionally, required for the formation of a threonylcarbamoyl group on adenosine at position 37 (t(6)A37) in tRNAs that read codons beginning with adenine. Is involved in the transfer of the threonylcarbamoyl moiety of threonylcarbamoyl-AMP (TC-AMP) to the N6 group of A37, together with TsaE and TsaB. TsaD likely plays a direct catalytic role in this reaction. In Histophilus somni (strain 2336) (Haemophilus somnus), this protein is tRNA N6-adenosine threonylcarbamoyltransferase.